The chain runs to 309 residues: MTFPAFLSPDPTWDGDSTGGPLLLTVRFSASIPDFPLDIENPDITTAAGLKQLIRTHLPPNLSSHRLRLIYAGRGLEDATPLSVSLKLPPSPSRTPVVQEDATTVKGKGKAPIREQPRLYIHCSIGDIVLSDADLAAEAAIATTLQQEQADEDYTGRKKQQQPPPSTTSAPRGFDRLLSAGFTPSEVSALRSQFMAIQSVSRTPDTMPTGAELRELEDRWMDEGSSAMAAGVPGGGEGISFADDDGGFGAGSRGAMDDMLWGAVMGFFWPVGCAMWLRREEGVWSWRKGLAVFVGVVINVAFGAMRIMN.

N61 is a glycosylation site (N-linked (GlcNAc...) asparagine). Disordered regions lie at residues 88–110 (LPPS…GKGK) and 148–177 (EQAD…FDRL). Helical transmembrane passes span 257-277 (DDML…AMWL) and 289-309 (GLAV…RIMN).

This sequence belongs to the dsc3 family. As to quaternary structure, component of the DSC E3 ubiquitin ligase complex composed of dscA, dscB, dscC and dscD.

The protein localises to the endoplasmic reticulum membrane. It functions in the pathway protein modification; protein ubiquitination. Component of the DSC E3 ubiquitin ligase complex which is required for the srbA transcriptional activator proteolytic cleavage to release the soluble transcription factor from the membrane in low oxygen or sterol conditions. Required for growth during hypoxia and triazole drug susceptibility, as well as for virulence in a murine model of invasive pulmonary aspergillosis (IPA). This Aspergillus fumigatus (strain ATCC MYA-4609 / CBS 101355 / FGSC A1100 / Af293) (Neosartorya fumigata) protein is DSC E3 ubiquitin ligase complex subunit C.